A 141-amino-acid polypeptide reads, in one-letter code: MELDLINEHKIGVTKGTELEKEVQANFEGECKEVGLYLAMARQAQREGLPEVAEVLIRIAMEEAQHAAHFAEMNGLISENLKENIEMMLKGECMANKEKKAAATKAKELGIDPAHDFFDESSRDEARHAKMLKGILDRYFK.

The region spanning Val13–Lys141 is the Ferritin-like diiron domain. The Fe cation site is built by Glu63, His66, Glu125, and His128.

This is an uncharacterized protein from Methanocaldococcus jannaschii (strain ATCC 43067 / DSM 2661 / JAL-1 / JCM 10045 / NBRC 100440) (Methanococcus jannaschii).